Consider the following 344-residue polypeptide: tRNA N6-adenosine threonylcarbamoyltransferase (344 aa).

Fe cation is bound by residues His-111 and His-115. Substrate-binding positions include 133–137 (VVSGG), Asp-166, Gly-179, Asp-183, and Asn-270. Position 298 (Asp-298) interacts with Fe cation.

This sequence belongs to the KAE1 / TsaD family. It depends on Fe(2+) as a cofactor.

It localises to the cytoplasm. It catalyses the reaction L-threonylcarbamoyladenylate + adenosine(37) in tRNA = N(6)-L-threonylcarbamoyladenosine(37) in tRNA + AMP + H(+). Functionally, required for the formation of a threonylcarbamoyl group on adenosine at position 37 (t(6)A37) in tRNAs that read codons beginning with adenine. Is involved in the transfer of the threonylcarbamoyl moiety of threonylcarbamoyl-AMP (TC-AMP) to the N6 group of A37, together with TsaE and TsaB. TsaD likely plays a direct catalytic role in this reaction. This chain is tRNA N6-adenosine threonylcarbamoyltransferase, found in Persephonella marina (strain DSM 14350 / EX-H1).